The primary structure comprises 483 residues: V-type proton ATPase subunit H (483 aa).

Position 483 is a phosphoserine (serine 483).

The protein belongs to the V-ATPase H subunit family. In terms of assembly, V-ATPase is a heteromultimeric enzyme made up of two complexes: the ATP-hydrolytic V1 complex and the proton translocation V0 complex. The V1 complex consists of three catalytic AB heterodimers that form a heterohexamer, three peripheral stalks each consisting of EG heterodimers, one central rotor including subunits D and F, and the regulatory subunits C and H. The proton translocation complex V0 consists of the proton transport subunit a, a ring of proteolipid subunits c9c'', rotary subunit d, subunits e and f, and the accessory subunits ATP6AP1/Ac45 and ATP6AP2/PRR. Interacts with AP2M1. Interacts with TM9SF4 in colon cancer cells. (Microbial infection) Interacts with HIV-1 Nef protein. As to quaternary structure, (Microbial infection) Interacts with M.tuberculosis PtpA, which blocks V-ATPase trafficking and phagosome acidification. As to expression, widely expressed.

It is found in the cytoplasmic vesicle. It localises to the clathrin-coated vesicle membrane. Subunit of the V1 complex of vacuolar(H+)-ATPase (V-ATPase), a multisubunit enzyme composed of a peripheral complex (V1) that hydrolyzes ATP and a membrane integral complex (V0) that translocates protons. V-ATPase is responsible for acidifying and maintaining the pH of intracellular compartments and in some cell types, is targeted to the plasma membrane, where it is responsible for acidifying the extracellular environment. Subunit H is essential for V-ATPase activity, but not for the assembly of the complex. Involved in the endocytosis mediated by clathrin-coated pits, required for the formation of endosomes. The polypeptide is V-type proton ATPase subunit H (ATP6V1H) (Homo sapiens (Human)).